The sequence spans 212 residues: ATP-dependent dethiobiotin synthetase BioD (212 aa).

ATP is bound at residue 12–17 (DCGKTF). Residue T16 coordinates Mg(2+). K33 is an active-site residue. S37 provides a ligand contact to substrate. ATP-binding positions include D50, 110–113 (EGAG), and 170–171 (NC). Mg(2+) is bound by residues D50 and E110.

This sequence belongs to the dethiobiotin synthetase family. In terms of assembly, homodimer. It depends on Mg(2+) as a cofactor.

It localises to the cytoplasm. It catalyses the reaction (7R,8S)-7,8-diammoniononanoate + CO2 + ATP = (4R,5S)-dethiobiotin + ADP + phosphate + 3 H(+). It participates in cofactor biosynthesis; biotin biosynthesis; biotin from 7,8-diaminononanoate: step 1/2. Catalyzes a mechanistically unusual reaction, the ATP-dependent insertion of CO2 between the N7 and N8 nitrogen atoms of 7,8-diaminopelargonic acid (DAPA, also called 7,8-diammoniononanoate) to form a ureido ring. This Legionella pneumophila subsp. pneumophila (strain Philadelphia 1 / ATCC 33152 / DSM 7513) protein is ATP-dependent dethiobiotin synthetase BioD.